Here is an 893-residue protein sequence, read N- to C-terminus: UPF0182 protein CLI_0022 (893 aa).

The next 7 helical transmembrane spans lie at 9 to 29, 49 to 69, 94 to 114, 154 to 174, 202 to 222, 246 to 266, and 273 to 293; these read IPLF…NFII, AIII…WMYY, LFFI…SSSY, VIIS…FILE, LAIV…IKIW, FYKI…LSIV, and VSIC…ASFL.

Belongs to the UPF0182 family.

The protein localises to the cell membrane. In Clostridium botulinum (strain Langeland / NCTC 10281 / Type F), this protein is UPF0182 protein CLI_0022.